Here is a 100-residue protein sequence, read N- to C-terminus: uncharacterized protein (100 aa).

A helical membrane pass occupies residues 28–45 (VFLVFYIITMVKIYIFLI).

It localises to the membrane. This is an uncharacterized protein from Saccharomyces cerevisiae (strain ATCC 204508 / S288c) (Baker's yeast).